The primary structure comprises 597 residues: Elongation factor 4 (597 aa).

Positions 2–184 (KNIRNFSIIA…SIVEHLPAPE (183 aa)) constitute a tr-type G domain. Residues 14-19 (DHGKST) and 131-134 (NKID) each bind GTP.

The protein belongs to the TRAFAC class translation factor GTPase superfamily. Classic translation factor GTPase family. LepA subfamily.

The protein localises to the cell inner membrane. The enzyme catalyses GTP + H2O = GDP + phosphate + H(+). Its function is as follows. Required for accurate and efficient protein synthesis under certain stress conditions. May act as a fidelity factor of the translation reaction, by catalyzing a one-codon backward translocation of tRNAs on improperly translocated ribosomes. Back-translocation proceeds from a post-translocation (POST) complex to a pre-translocation (PRE) complex, thus giving elongation factor G a second chance to translocate the tRNAs correctly. Binds to ribosomes in a GTP-dependent manner. This is Elongation factor 4 from Desulfotalea psychrophila (strain LSv54 / DSM 12343).